The sequence spans 397 residues: Serpin B10 (397 aa).

Positions 74–77 (KKRK) match the Nuclear localization signal motif.

It belongs to the serpin family. Ov-serpin subfamily.

The protein resides in the nucleus. Its subcellular location is the cytoplasm. In terms of biological role, protease inhibitor that may play a role in the regulation of protease activities during hematopoiesis and apoptosis induced by TNF. May regulate protease activities in the cytoplasm and in the nucleus. The polypeptide is Serpin B10 (SERPINB10) (Rhinolophus ferrumequinum (Greater horseshoe bat)).